Consider the following 203-residue polypeptide: Probable nicotinate-nucleotide adenylyltransferase (203 aa).

This sequence belongs to the NadD family.

It carries out the reaction nicotinate beta-D-ribonucleotide + ATP + H(+) = deamido-NAD(+) + diphosphate. It participates in cofactor biosynthesis; NAD(+) biosynthesis; deamido-NAD(+) from nicotinate D-ribonucleotide: step 1/1. Functionally, catalyzes the reversible adenylation of nicotinate mononucleotide (NaMN) to nicotinic acid adenine dinucleotide (NaAD). This Dictyoglomus turgidum (strain DSM 6724 / Z-1310) protein is Probable nicotinate-nucleotide adenylyltransferase.